The sequence spans 162 residues: Small ribosomal subunit protein uS7m (162 aa).

This sequence belongs to the universal ribosomal protein uS7 family. In terms of assembly, part of the small ribosomal subunit.

Its subcellular location is the mitochondrion. One of the primary rRNA binding proteins, it binds directly to 16S-like rRNA where it nucleates assembly of the head domain of the small subunit. In Dictyostelium citrinum (Slime mold), this protein is Small ribosomal subunit protein uS7m (mrps7).